The primary structure comprises 203 residues: dITP/XTP pyrophosphatase (203 aa).

Position 8–13 (8–13 (SNNAGK)) interacts with substrate. Mg(2+) is bound by residues Asp-40 and Asp-69. Asp-69 (proton acceptor) is an active-site residue. Substrate contacts are provided by residues Ser-70, 152–155 (FGYD), Lys-175, and 180–181 (HR).

Belongs to the HAM1 NTPase family. Homodimer. Mg(2+) is required as a cofactor.

It catalyses the reaction XTP + H2O = XMP + diphosphate + H(+). The catalysed reaction is dITP + H2O = dIMP + diphosphate + H(+). It carries out the reaction ITP + H2O = IMP + diphosphate + H(+). Pyrophosphatase that catalyzes the hydrolysis of nucleoside triphosphates to their monophosphate derivatives, with a high preference for the non-canonical purine nucleotides XTP (xanthosine triphosphate), dITP (deoxyinosine triphosphate) and ITP. Seems to function as a house-cleaning enzyme that removes non-canonical purine nucleotides from the nucleotide pool, thus preventing their incorporation into DNA/RNA and avoiding chromosomal lesions. The protein is dITP/XTP pyrophosphatase of Nitrosomonas europaea (strain ATCC 19718 / CIP 103999 / KCTC 2705 / NBRC 14298).